Here is a 589-residue protein sequence, read N- to C-terminus: Netrin-G2 (589 aa).

The first 17 residues, 1 to 17 (MLRLLALFLHCLPLVSG), serve as a signal peptide directing secretion. Cystine bridges form between Cys-22–Cys-39, Cys-61–Cys-81, and Cys-69–Cys-77. Residues 35–286 (EFYACQPKVM…AISNIEVIGR (252 aa)) enclose the Laminin N-terminal domain. An NGL discriminant loop I region spans residues 69 to 88 (CSHENPYLCSNECDASNPDL). Residues Asn-122 and Asn-128 are each glycosylated (N-linked (GlcNAc...) asparagine). The cysteines at positions 171 and 195 are disulfide-linked. Positions 201 to 203 (RWA) are NGL discriminant loop II. The NGL discriminant loop III stretch occupies residues 264-267 (TYVQ). 15 disulfide bridges follow: Cys-287-Cys-296, Cys-289-Cys-305, Cys-307-Cys-316, Cys-319-Cys-344, Cys-413-Cys-422, Cys-415-Cys-433, Cys-436-Cys-445, Cys-448-Cys-466, Cys-469-Cys-481, Cys-471-Cys-487, Cys-489-Cys-498, Cys-501-Cys-511, Cys-516-Cys-529, Cys-523-Cys-535, and Cys-537-Cys-546. 3 consecutive Laminin EGF-like domains span residues 287–346 (CKCN…ACAA), 413–468 (CECY…VCIE), and 469–513 (CNCN…GCYP). N-linked (GlcNAc...) asparagine glycosylation is present at Asn-310. A glycan (N-linked (GlcNAc...) asparagine) is linked at Asn-455. Residue Asn-482 is glycosylated (N-linked (GlcNAc...) asparagine). Residue Gly-566 is the site of GPI-anchor amidated glycine attachment. Residues 567–589 (IVPRPDTLLGCLLLLGLAARLAC) constitute a propeptide, removed in mature form.

Interacts with LRRC4. Post-translationally, N-glycosylated. Expression is restricted primarily to neurons of the CNS, particularly in the cerebral cortex, habenular nucleus and superior colliculus. Low levels in lung, kidney, heart and spleen.

The protein localises to the cell membrane. Involved in controlling patterning and neuronal circuit formation at the laminar, cellular, subcellular and synaptic levels. Promotes neurite outgrowth of both axons and dendrites. In Mus musculus (Mouse), this protein is Netrin-G2 (Ntng2).